We begin with the raw amino-acid sequence, 757 residues long: Xaa-Pro dipeptidyl-peptidase (757 aa).

Catalysis depends on charge relay system residues S348, D468, and H498.

Belongs to the peptidase S15 family. As to quaternary structure, homodimer.

It localises to the cytoplasm. The enzyme catalyses Hydrolyzes Xaa-Pro-|- bonds to release unblocked, N-terminal dipeptides from substrates including Ala-Pro-|-p-nitroanilide and (sequentially) Tyr-Pro-|-Phe-Pro-|-Gly-Pro-|-Ile.. Its function is as follows. Removes N-terminal dipeptides sequentially from polypeptides having unsubstituted N-termini provided that the penultimate residue is proline. This chain is Xaa-Pro dipeptidyl-peptidase, found in Streptococcus pneumoniae (strain P1031).